Consider the following 416-residue polypeptide: Adenylosuccinate synthetase (416 aa).

GTP is bound by residues 13–19 (GDEGKGK) and 41–43 (GHT). Asp14 functions as the Proton acceptor in the catalytic mechanism. Positions 14 and 41 each coordinate Mg(2+). Residues 14–17 (DEGK), 39–42 (NAGH), Thr126, Arg140, Gln220, Thr235, and Arg299 each bind IMP. His42 acts as the Proton donor in catalysis. Substrate is bound at residue 295–301 (TTTGRRR). GTP is bound by residues Arg301, 327–329 (KLD), and 405–407 (STS).

The protein belongs to the adenylosuccinate synthetase family. Homodimer. Mg(2+) serves as cofactor.

It is found in the cytoplasm. It catalyses the reaction IMP + L-aspartate + GTP = N(6)-(1,2-dicarboxyethyl)-AMP + GDP + phosphate + 2 H(+). It functions in the pathway purine metabolism; AMP biosynthesis via de novo pathway; AMP from IMP: step 1/2. Its function is as follows. Plays an important role in the de novo pathway of purine nucleotide biosynthesis. Catalyzes the first committed step in the biosynthesis of AMP from IMP. The protein is Adenylosuccinate synthetase of Campylobacter curvus (strain 525.92).